We begin with the raw amino-acid sequence, 264 residues long: Thiazole synthase (264 aa).

Lys106 functions as the Schiff-base intermediate with DXP in the catalytic mechanism. 1-deoxy-D-xylulose 5-phosphate is bound by residues Gly167, 193-194, and 215-216; these read AG and NS.

It belongs to the ThiG family. In terms of assembly, homotetramer. Forms heterodimers with either ThiH or ThiS.

The protein localises to the cytoplasm. The catalysed reaction is [ThiS sulfur-carrier protein]-C-terminal-Gly-aminoethanethioate + 2-iminoacetate + 1-deoxy-D-xylulose 5-phosphate = [ThiS sulfur-carrier protein]-C-terminal Gly-Gly + 2-[(2R,5Z)-2-carboxy-4-methylthiazol-5(2H)-ylidene]ethyl phosphate + 2 H2O + H(+). It functions in the pathway cofactor biosynthesis; thiamine diphosphate biosynthesis. In terms of biological role, catalyzes the rearrangement of 1-deoxy-D-xylulose 5-phosphate (DXP) to produce the thiazole phosphate moiety of thiamine. Sulfur is provided by the thiocarboxylate moiety of the carrier protein ThiS. In vitro, sulfur can be provided by H(2)S. This chain is Thiazole synthase, found in Prochlorococcus marinus (strain MIT 9312).